Here is a 445-residue protein sequence, read N- to C-terminus: FAD-dependent monooxygenase sorC (445 aa).

Residues P8–L28 traverse the membrane as a helical segment. An N-linked (GlcNAc...) asparagine glycan is attached at N31. 2 residues coordinate FAD: E38 and R119. The active site involves R201. Residues D323 and A336 each contribute to the FAD site. An N-linked (GlcNAc...) asparagine glycan is attached at N358.

Belongs to the paxM FAD-dependent monooxygenase family. The cofactor is FAD.

It localises to the membrane. Its pathway is secondary metabolite biosynthesis. Its function is as follows. FAD-dependent monooxygenase; part of the gene cluster that mediates the biosynthesis of sorbicillinoids, a diverse group of yellow secondary metabolites that restrict growth of competing pathogenic fungi but not of bacteria. Sorbicillinoids biosynthesis requires the action of two PKSs. SorA iteratively combines three acetyl units and the growing chain is modified by the ketoacyl reductase subunit, and optional by the enoyl reductase subunit in the second cycle. The polyketide is then handed over to the PKS SorB, which adds three more acetyl units, and two methyl groups. SorB releases an aldehyde, which undergoes spontaneous cyclization resulting in the formation of sorbicillin or 2',3'-dihydrosorbicillin. The monooxygenase sorC oxidizes sorbicillin and 2',3'-dihydrosorbicillin to 2',3'-dihydrosorbicillinol and sorbicillinol, respectively. The oxidoreductase sorD further converts sorbicillinol into oxosorbicillinol. Sorbicillinol is the building block for the other sorbicillinoids such as disorbicillinol, bisvertinolon, and dihydrobisvertinolone. In Penicillium rubens (strain ATCC 28089 / DSM 1075 / NRRL 1951 / Wisconsin 54-1255) (Penicillium chrysogenum), this protein is FAD-dependent monooxygenase sorC.